The chain runs to 275 residues: Formamidopyrimidine-DNA glycosylase (275 aa).

The Schiff-base intermediate with DNA role is filled by proline 2. The active-site Proton donor is the glutamate 3. The Proton donor; for beta-elimination activity role is filled by lysine 59. Positions 94 and 113 each coordinate DNA. Residues 241 to 275 (LVHTHAKEPCQICGTIIQKTKVNGRGTYYCPNCQN) form an FPG-type zinc finger. Arginine 265 functions as the Proton donor; for delta-elimination activity in the catalytic mechanism.

Belongs to the FPG family. Monomer. Zn(2+) serves as cofactor.

The enzyme catalyses Hydrolysis of DNA containing ring-opened 7-methylguanine residues, releasing 2,6-diamino-4-hydroxy-5-(N-methyl)formamidopyrimidine.. It catalyses the reaction 2'-deoxyribonucleotide-(2'-deoxyribose 5'-phosphate)-2'-deoxyribonucleotide-DNA = a 3'-end 2'-deoxyribonucleotide-(2,3-dehydro-2,3-deoxyribose 5'-phosphate)-DNA + a 5'-end 5'-phospho-2'-deoxyribonucleoside-DNA + H(+). Involved in base excision repair of DNA damaged by oxidation or by mutagenic agents. Acts as a DNA glycosylase that recognizes and removes damaged bases. Has a preference for oxidized purines, such as 7,8-dihydro-8-oxoguanine (8-oxoG). Has AP (apurinic/apyrimidinic) lyase activity and introduces nicks in the DNA strand. Cleaves the DNA backbone by beta-delta elimination to generate a single-strand break at the site of the removed base with both 3'- and 5'-phosphates. The protein is Formamidopyrimidine-DNA glycosylase of Ureaplasma parvum serovar 3 (strain ATCC 700970).